Reading from the N-terminus, the 610-residue chain is Major facilitator superfamily multidrug transporter FLU1 (610 aa).

N-linked (GlcNAc...) asparagine glycans are attached at residues asparagine 3 and asparagine 21. Polar residues predominate over residues 47-58; sequence GPTDSVESSSNT. Residues 47–74 form a disordered region; it reads GPTDSVESSSNTADEENEINSFNAQNVK. The next 11 helical transmembrane spans lie at 165–185, 209–229, 231–251, 262–282, 292–312, 323–343, 408–428, 437–457, 478–498, 507–527, and 530–550; these read ILYCASVGLAALSVSMGSAMF, LFVFGFASGPVIYGPLSELFG, KLVMVPSCLGYVCFSFAVATA, FFAGFIGAAPLVVAPAVMADM, IAIFSMLLFGGPMLAPILGAF, WTSYFCGIIGSLALFMNTFLL, AFIYGMLYLFLTAIPLIFLGE, ELPYLAMLIGILIGGGMIMLF, LEPMMVGGFTFVIGIFWLGWT, WIVPVIGAAFVGNGLMLIFLP, and NYIIDCYLLYAATALAGNTFI. N-linked (GlcNAc...) asparagine glycosylation occurs at asparagine 568. A helical membrane pass occupies residues 573 to 593; that stretch reads WASTLLGCIGILLLPMPFVFY.

This sequence belongs to the major facilitator superfamily. DHA1 family. Polyamines/proton antiporter (TC 2.A.1.2.16) subfamily.

The protein resides in the cell membrane. In terms of biological role, major facilitator superfamily transporter that mediates resistance to structurally and functionally unrelated compounds including cycloheximide but also azoles such as fuconazole, ketoconazole and itraconazole. Also mediates efflux of histatin 5, a salivary human antimicrobial peptide, and is responsible for reduction of its toxicity in C.albicans. The protein is Major facilitator superfamily multidrug transporter FLU1 of Candida albicans (strain SC5314 / ATCC MYA-2876) (Yeast).